We begin with the raw amino-acid sequence, 293 residues long: MFYGSVVALITPFKDGTLDRQGLKRLIEFHIENGTDAIVVAGTTGESPTLTYEEHELLIELAVGYSNKRIPIIAGTGANSTHEAITLTKFAEKVGADASLQVVPYYNKPTQEGIYQHFKAIAEETNIPLILYNIPSRTGVDMLPETFARLYGDFPNVIGIKEATGNVARVSETISLTNEDVLILSGDDALTLPMMAVGAKGVISVANNIIPKEISQMCKLALEGKFEEAKKIHNQYWDLFKVLFIETNPIPIKTAAYLMGLIESLELRLPLYTMSKSNEEKLKEVLRKHSLIK.

T44 is a pyruvate binding site. Catalysis depends on Y132, which acts as the Proton donor/acceptor. K161 acts as the Schiff-base intermediate with substrate in catalysis. I203 lines the pyruvate pocket.

This sequence belongs to the DapA family. As to quaternary structure, homotetramer; dimer of dimers.

Its subcellular location is the cytoplasm. The catalysed reaction is L-aspartate 4-semialdehyde + pyruvate = (2S,4S)-4-hydroxy-2,3,4,5-tetrahydrodipicolinate + H2O + H(+). Its pathway is amino-acid biosynthesis; L-lysine biosynthesis via DAP pathway; (S)-tetrahydrodipicolinate from L-aspartate: step 3/4. Its function is as follows. Catalyzes the condensation of (S)-aspartate-beta-semialdehyde [(S)-ASA] and pyruvate to 4-hydroxy-tetrahydrodipicolinate (HTPA). The protein is 4-hydroxy-tetrahydrodipicolinate synthase of Sulfurihydrogenibium sp. (strain YO3AOP1).